A 616-amino-acid chain; its full sequence is Sodium- and chloride-dependent transporter XTRP3 (616 aa).

A compositionally biased stretch (basic residues) spans 1–11 (MRLAIKRRASR). Residues 1 to 26 (MRLAIKRRASRGQRPGPDEKRARDME) form a disordered region. Residues 1-37 (MRLAIKRRASRGQRPGPDEKRARDMEKARPQWGNPLQ) lie on the Cytoplasmic side of the membrane. The segment covering 16–26 (GPDEKRARDME) has biased composition (basic and acidic residues). The chain crosses the membrane as a helical span at residues 38–58 (FVFACISYAVGLGNVWRFPYL). Residues 59 to 66 (CQMYGGGS) lie on the Extracellular side of the membrane. The helical transmembrane segment at 67–87 (FLVPYLIMLIVEGMPLLYLEL) threads the bilayer. The Cytoplasmic segment spans residues 88 to 103 (AVGQRMRQGSIGAWRT). A helical transmembrane segment spans residues 104–124 (ISPYLSGVGVASVVVSFFLSM). The Extracellular segment spans residues 125–189 (YYNVINAWGF…ISPSIQENGG (65 aa)). N-linked (GlcNAc...) asparagine glycosylation is present at asparagine 155. The helical transmembrane segment at 190 to 210 (VQWEPALCLTLAWLMVYLCIL) threads the bilayer. Topologically, residues 211-218 (RGTESTGK) are cytoplasmic. The helical transmembrane segment at 219–239 (VVYFTALMPYCVLIIYLVRGL) threads the bilayer. Residues 240–265 (TLHGATNGLMYMFTPKIEQLANPKAW) are Extracellular-facing. A helical transmembrane segment spans residues 266–286 (INAATQIFFSLGLGFGSLIAF). The Cytoplasmic portion of the chain corresponds to 287 to 300 (ASYNEPSNDCQKHA). Residues 301 to 321 (VIVSVINSSTSIFASIVTFSI) form a helical membrane-spanning segment. Over 322 to 413 (YGFKATFNYE…EAIKNMEVSQ (92 aa)) the chain is Extracellular. An N-linked (GlcNAc...) asparagine glycan is attached at asparagine 381. The chain crosses the membrane as a helical span at residues 414–434 (LWSVLYFFMLLMLGMGSMLGN). At 435–455 (TAAILTPLTDSKVISSYLPKE) the chain is on the cytoplasmic side. The helical transmembrane segment at 456–476 (AISGLVCLINCAVGMVFTMEA) threads the bilayer. Topologically, residues 477–489 (GNYWFDIFNDYAA) are extracellular. A helical membrane pass occupies residues 490-510 (TLSLLLIVLVETIAVCYVYGL). Residues 511-533 (RRFESDLRAMTGRPLNWYWKAMW) lie on the Cytoplasmic side of the membrane. Residues 534–554 (AFVSPLLIIGLFIFYLSDYIL) traverse the membrane as a helical segment. The Extracellular segment spans residues 555–578 (TGTLQYQAWDATQGQLVTKDYPPH). The chain crosses the membrane as a helical span at residues 579–599 (ALAVIGLLVASSTMCIPLVAL). Topologically, residues 600 to 616 (GTFIRNRLKRGGSSPVA) are cytoplasmic.

The protein belongs to the sodium:neurotransmitter symporter (SNF) (TC 2.A.22) family. SLC6A20 subfamily. In terms of tissue distribution, highly expressed in epithelial cells of duodenum, jejunum, ileum, stomach, cecum, colon and kidney proximal tubule. Also expressed in the choroid plexus, microglia and meniges of the brain and in the ovary.

The protein localises to the apical cell membrane. The catalysed reaction is L-proline(out) + chloride(out) + 2 Na(+)(out) = L-proline(in) + chloride(in) + 2 Na(+)(in). It carries out the reaction 4-hydroxy-L-proline(out) + chloride(out) + 2 Na(+)(out) = 4-hydroxy-L-proline(in) + chloride(in) + 2 Na(+)(in). It catalyses the reaction 2-methyl-2-(methylamino)propanoate(out) + chloride(out) + 2 Na(+)(out) = 2-methyl-2-(methylamino)propanoate(in) + chloride(in) + 2 Na(+)(in). The enzyme catalyses L-pipecolate(out) + chloride(out) + 2 Na(+)(out) = L-pipecolate(in) + chloride(in) + 2 Na(+)(in). The catalysed reaction is glycine betaine(out) + chloride(out) + 2 Na(+)(out) = glycine betaine(in) + chloride(in) + 2 Na(+)(in). It carries out the reaction glycine(out) + chloride(out) + 2 Na(+)(out) = glycine(in) + chloride(in) + 2 Na(+)(in). Functionally, mediates the Na(+)- and Cl(-)-dependent uptake of imino acids such as L-proline, N-methyl-L-proline and pipecolate as well as N-methylated amino acids. Also transports glycine, regulates proline and glycine homeostasis in the brain playing a role in the modulation of NMDAR currents. This chain is Sodium- and chloride-dependent transporter XTRP3, found in Rattus norvegicus (Rat).